A 68-amino-acid chain; its full sequence is Large ribosomal subunit protein uL29 (68 aa).

It belongs to the universal ribosomal protein uL29 family.

In Chloroflexus aurantiacus (strain ATCC 29364 / DSM 637 / Y-400-fl), this protein is Large ribosomal subunit protein uL29.